A 338-amino-acid polypeptide reads, in one-letter code: Heat-inducible transcription repressor HrcA (338 aa).

The protein belongs to the HrcA family.

Functionally, negative regulator of class I heat shock genes (grpE-dnaK-dnaJ and groELS operons). Prevents heat-shock induction of these operons. The protein is Heat-inducible transcription repressor HrcA of Polaromonas sp. (strain JS666 / ATCC BAA-500).